We begin with the raw amino-acid sequence, 531 residues long: T-complex protein 1 subunit zeta (531 aa).

Ala-2 is modified (N-acetylalanine). Lys-5 is subject to N6-acetyllysine. Position 39 (Gly-39) interacts with ADP. Position 39 (Gly-39) interacts with ATP. Asp-90 is a Mg(2+) binding site. Positions 91, 92, 93, 94, 158, and 159 each coordinate ADP. ATP contacts are provided by Gly-91, Thr-92, and Thr-93. Lys-199 bears the N6-acetyllysine mark. The residue at position 205 (Ser-205) is a Phosphoserine. Lys-251 participates in a covalent cross-link: Glycyl lysine isopeptide (Lys-Gly) (interchain with G-Cter in SUMO2). Residues Lys-287, Lys-365, Lys-377, and Lys-388 each carry the N6-acetyllysine modification. Ala-411 serves as a coordination point for ADP. Positions 411, 412, 496, and 501 each coordinate ATP. Asp-496 provides a ligand contact to ADP.

Belongs to the TCP-1 chaperonin family. As to quaternary structure, component of the chaperonin-containing T-complex (TRiC), a hexadecamer composed of two identical back-to-back stacked rings enclosing a protein folding chamber. Each ring is made up of eight different subunits: TCP1/CCT1, CCT2, CCT3, CCT4, CCT5, CCT6A/CCT6, CCT7, CCT8. Interacts with PACRG.

It localises to the cytoplasm. It catalyses the reaction ATP + H2O = ADP + phosphate + H(+). Its function is as follows. Component of the chaperonin-containing T-complex (TRiC), a molecular chaperone complex that assists the folding of actin, tubulin and other proteins upon ATP hydrolysis. The TRiC complex mediates the folding of WRAP53/TCAB1, thereby regulating telomere maintenance. The polypeptide is T-complex protein 1 subunit zeta (CCT6A) (Homo sapiens (Human)).